A 261-amino-acid polypeptide reads, in one-letter code: SLA class II histocompatibility antigen, DQ haplotype C beta chain (261 aa).

Positions 1–31 (MSGMVALRLPRGLWTAALTVMLVVLGAPVAE) are cleaved as a signal peptide. The segment at 32-126 (GRDSPQDFVF…IEEGTTLQRR (95 aa)) is beta-1. At 32 to 230 (GRDSPQDFVF…RAQSESAQSK (199 aa)) the chain is on the extracellular side. Cystine bridges form between Cys-47/Cys-111 and Cys-149/Cys-205. An N-linked (GlcNAc...) asparagine glycan is attached at Asn-51. The tract at residues 127-220 (VQPTVTISPS…SLQNPILVEW (94 aa)) is beta-2. Residues 129–233 (PTVTISPSKA…SESAQSKMLS (105 aa)) form the Ig-like C1-type domain. The segment at 221–230 (RAQSESAQSK) is connecting peptide. A helical membrane pass occupies residues 231–251 (MLSGVGGFVLGLIFLGLGLFI). The Cytoplasmic segment spans residues 252-261 (RHRSQKGLVR).

The protein belongs to the MHC class II family.

The protein localises to the membrane. In Sus scrofa (Pig), this protein is SLA class II histocompatibility antigen, DQ haplotype C beta chain.